The sequence spans 212 residues: Large ribosomal subunit protein uL1 (212 aa).

This sequence belongs to the universal ribosomal protein uL1 family. As to quaternary structure, part of the 50S ribosomal subunit.

Functionally, binds directly to 23S rRNA. Probably involved in E site tRNA release. Protein L1 is also a translational repressor protein, it controls the translation of its operon by binding to its mRNA. This chain is Large ribosomal subunit protein uL1, found in Haloquadratum walsbyi (strain DSM 16790 / HBSQ001).